Consider the following 174-residue polypeptide: Pituitary tumor-transforming gene 1 protein-interacting protein (174 aa).

The signal sequence occupies residues 1–29; sequence MAPANLGLTPHWVMLLGAVLLLLLSGASA. The Extracellular portion of the chain corresponds to 30-93; the sequence is QEPPRVGCSE…RWGVCWVNFE (64 aa). Positions 36–89 constitute a PSI domain; the sequence is GCSEYTNRSCEECLRNVSCLWCNENKACMDYPVRKILPPASLCKLSSARWGVCW. Residues Asn-42 and Asn-51 are each glycosylated (N-linked (GlcNAc...) asparagine). A helical transmembrane segment spans residues 94-114; the sequence is ALIITMSVLGGSVLLGITVCC. The Cytoplasmic portion of the chain corresponds to 115–174; it reads CYCCRRKKSRKPDKSDERAMREQEERRVRQEERRAEMKSRHDEIRKKYGLFKEQNPYEKF. The segment at 125-155 is disordered; sequence KPDKSDERAMREQEERRVRQEERRAEMKSRH. Over residues 126-155 the composition is skewed to basic and acidic residues; it reads PDKSDERAMREQEERRVRQEERRAEMKSRH. The stretch at 127–163 forms a coiled coil; it reads DKSDERAMREQEERRVRQEERRAEMKSRHDEIRKKYG. Tyr-171 is subject to Phosphotyrosine.

As to quaternary structure, interacts with PTTG1.

It is found in the cell membrane. The protein localises to the cytoplasm. Its subcellular location is the nucleus. In terms of biological role, may facilitate PTTG1 nuclear translocation. This is Pituitary tumor-transforming gene 1 protein-interacting protein (Pttg1ip) from Mus musculus (Mouse).